A 220-amino-acid chain; its full sequence is Iron-sulfur cluster repair protein YtfE (220 aa).

It belongs to the RIC family. YtfE subfamily. In terms of assembly, homodimer.

The protein resides in the cytoplasm. In terms of biological role, di-iron-containing protein involved in the repair of iron-sulfur clusters damaged by oxidative and nitrosative stress conditions. This chain is Iron-sulfur cluster repair protein YtfE, found in Citrobacter koseri (strain ATCC BAA-895 / CDC 4225-83 / SGSC4696).